The sequence spans 93 residues: Co-chaperonin GroES (93 aa).

The protein belongs to the GroES chaperonin family. Heptamer of 7 subunits arranged in a ring. Interacts with the chaperonin GroEL.

It localises to the cytoplasm. In terms of biological role, together with the chaperonin GroEL, plays an essential role in assisting protein folding. The GroEL-GroES system forms a nano-cage that allows encapsulation of the non-native substrate proteins and provides a physical environment optimized to promote and accelerate protein folding. GroES binds to the apical surface of the GroEL ring, thereby capping the opening of the GroEL channel. The sequence is that of Co-chaperonin GroES from Streptococcus gordonii.